Reading from the N-terminus, the 174-residue chain is Pediocin PA-1 biosynthesis protein PedC (174 aa).

Its function is as follows. Probably involved in pediocin PA-1 biosynthesis. In Pediococcus acidilactici, this protein is Pediocin PA-1 biosynthesis protein PedC (pedC).